The chain runs to 52 residues: MSETDGEAEETGQTHECRRCGREQGLVGKYDIWLCRQCFREIARSMGFKKYS.

Positions 17, 20, 35, and 38 each coordinate Zn(2+).

This sequence belongs to the universal ribosomal protein uS14 family. Zinc-binding uS14 subfamily. As to quaternary structure, part of the 30S ribosomal subunit. It depends on Zn(2+) as a cofactor.

Binds 16S rRNA, required for the assembly of 30S particles. In Halobacterium salinarum (strain ATCC 700922 / JCM 11081 / NRC-1) (Halobacterium halobium), this protein is Small ribosomal subunit protein uS14.